The primary structure comprises 452 residues: Scaffold protein ILK (452 aa).

5 ANK repeats span residues 2 to 30, 31 to 63, 64 to 96, 97 to 129, and 130 to 174; these read DDIF…LNQG, DDHG…INVM, NRGD…INAV, NEHG…VSIA, and NKYS…GTTR. A Protein kinase domain is found at 193–446; that stretch reads LSLSQKLNEN…PKFDMIVPIL (254 aa). Residues asparagine 200, asparagine 202, serine 204, histidine 270, methionine 272, and asparagine 279 each coordinate ATP. Aspartate 339 provides a ligand contact to Mg(2+). An ATP-binding site is contributed by lysine 341. The Nuclear localization signal motif lies at 363–371; it reads KKPEEINRR.

It belongs to the protein kinase superfamily. TKL Ser/Thr protein kinase family. In terms of assembly, interacts with PXN/PAXILLIN (via LD motif 4).

Its subcellular location is the cell junction. It is found in the focal adhesion. It localises to the cell membrane. The protein localises to the cell projection. The protein resides in the lamellipodium. Its subcellular location is the cytoplasm. It is found in the myofibril. It localises to the sarcomere. The protein localises to the nucleus. The protein resides in the cytoskeleton. Its subcellular location is the microtubule organizing center. It is found in the centrosome. It localises to the cell cortex. Functionally, scaffold protein which mediates protein-protein interactions during a range of cellular events including focal adhesion assembly, cell adhesion and cell migration. This chain is Scaffold protein ILK, found in Gallus gallus (Chicken).